The chain runs to 648 residues: UDP-galactose:fucoside alpha-3-galactosyltransferase (648 aa).

WD repeat units follow at residues 320–358 (NHTDIITSINSSDDGKLFTTSIDKSIKIWKFENTSGNDT), 372–420 (HKRG…IQTF), 422–461 (GHTGIINQLIVIPNSSYFFTCSDDNTIRQFDLNNINFKRV), 464–505 (GHNG…NIIK), 507–546 (NQGGWIRKIIYNDNLNQLISGGNDGTIKIWSCDNLNNFND), 556–595 (NENSSINDLQFDSDTNLIYCAFENGSLKSFKLTSNNNNNN), and 617–648 (HLNSSINCIHISKSLNLLFSGGFDKQIKSWDL).

It belongs to the glycosyltransferase 77 family. Mn(2+) serves as cofactor.

Its subcellular location is the cytoplasm. It catalyses the reaction an alpha-L-fucosyl-(1-&gt;2)-beta-D-galactosyl derivative + UDP-alpha-D-galactose = an alpha-D-galactosyl-(1-&gt;3)-[alpha-L-fucosyl-(1-&gt;2)]-beta-D-galactosyl derivative + UDP + H(+). The protein operates within protein modification; protein glycosylation. With respect to regulation, stimulated by dithiothreitol (DTT) in vitro. Totally inhibited by EDTA. Functionally, specifically catalyzes the transfer of a galactosyl residue to the hydroxyproline-linked saccharide on Skp1 protein (fpaA/fpaB). Catalyzes the formation of a Gal-alpha-1,3-Fuc linkage, leading to Gal-Fuc-Gal-GlcNAc-HyPro143-Skp1. This Dictyostelium discoideum (Social amoeba) protein is UDP-galactose:fucoside alpha-3-galactosyltransferase (agtA).